The sequence spans 709 residues: Probable lanosterol 14-alpha demethylase (709 aa).

Residue Cys425 coordinates heme.

This sequence belongs to the cytochrome P450 family. Heme serves as cofactor.

Its subcellular location is the membrane. The enzyme catalyses a 14alpha-methyl steroid + 3 reduced [NADPH--hemoprotein reductase] + 3 O2 = a Delta(14) steroid + formate + 3 oxidized [NADPH--hemoprotein reductase] + 4 H2O + 4 H(+). It functions in the pathway steroid biosynthesis; zymosterol biosynthesis; zymosterol from lanosterol: step 1/6. Functionally, catalyzes the 14-alpha demethylation of obtusifoliol to 4 alpha-methyl-5 alpha-ergosta-8,14,24(28)-trien-3 beta-ol. The protein is Probable lanosterol 14-alpha demethylase of Acanthamoeba polyphaga (Amoeba).